The chain runs to 390 residues: Glucose-fructose oxidoreductase domain-containing protein 1 (390 aa).

Residues 1–21 (MLPGVGVFGTSLTARVIIPLL) form the signal peptide.

Belongs to the Gfo/Idh/MocA family. In terms of assembly, homodimer. Interacts with NKIRAS2.

It is found in the secreted. Functionally, probably catalytically inactive enzyme. Does not bind NAD or NADP. The protein is Glucose-fructose oxidoreductase domain-containing protein 1 (Gfod1) of Mus musculus (Mouse).